Reading from the N-terminus, the 325-residue chain is ATP phosphoribosyltransferase (325 aa).

It belongs to the ATP phosphoribosyltransferase family. Long subfamily. Mg(2+) is required as a cofactor.

Its subcellular location is the cytoplasm. It catalyses the reaction 1-(5-phospho-beta-D-ribosyl)-ATP + diphosphate = 5-phospho-alpha-D-ribose 1-diphosphate + ATP. It functions in the pathway amino-acid biosynthesis; L-histidine biosynthesis; L-histidine from 5-phospho-alpha-D-ribose 1-diphosphate: step 1/9. Its activity is regulated as follows. Feedback inhibited by histidine. In terms of biological role, catalyzes the condensation of ATP and 5-phosphoribose 1-diphosphate to form N'-(5'-phosphoribosyl)-ATP (PR-ATP). Has a crucial role in the pathway because the rate of histidine biosynthesis seems to be controlled primarily by regulation of HisG enzymatic activity. The sequence is that of ATP phosphoribosyltransferase from Rhodopseudomonas palustris (strain HaA2).